We begin with the raw amino-acid sequence, 932 residues long: MYCBP-associated protein (932 aa).

2 disordered regions span residues 1 to 39 and 165 to 187; these read MMKK…PVSN and EEPK…PPQH. Over residues 165–178 the composition is skewed to basic and acidic residues; sequence EEPKPKPPKEEERP. Ser559 bears the Phosphoserine mark. The residue at position 560 (Thr560) is a Phosphothreonine. Ser566 is subject to Phosphoserine. The segment at 789–886 is disordered; sequence LPDEQGQKSP…TAPSQEPIDP (98 aa). Residues 795-806 are compositionally biased toward polar residues; the sequence is QKSPPVTESKVT. Basic and acidic residues predominate over residues 810–869; that stretch reads AGKEDRRGGAQEKKQLGTKDKDDKRGSKTPGKEDRPNSKKLKPKDDKKVVKSASRDRLLS.

In terms of assembly, interacts with MYCBP.

It is found in the cytoplasm. The protein localises to the membrane. Functionally, may play a role in spermatogenesis. May be involved in synaptic processes. This chain is MYCBP-associated protein, found in Mus musculus (Mouse).